Consider the following 392-residue polypeptide: Phospho-N-acetylmuramoyl-pentapeptide-transferase (392 aa).

11 helical membrane-spanning segments follow: residues Y24–G44, T76–L96, F100–W120, Y137–E157, W170–F190, V193–A213, G225–T245, S262–F282, V289–I309, I314–V334, and Q369–L389.

The protein belongs to the glycosyltransferase 4 family. MraY subfamily. Mg(2+) serves as cofactor.

It is found in the cell inner membrane. It carries out the reaction UDP-N-acetyl-alpha-D-muramoyl-L-alanyl-gamma-D-glutamyl-meso-2,6-diaminopimeloyl-D-alanyl-D-alanine + di-trans,octa-cis-undecaprenyl phosphate = di-trans,octa-cis-undecaprenyl diphospho-N-acetyl-alpha-D-muramoyl-L-alanyl-D-glutamyl-meso-2,6-diaminopimeloyl-D-alanyl-D-alanine + UMP. Its pathway is cell wall biogenesis; peptidoglycan biosynthesis. Its function is as follows. Catalyzes the initial step of the lipid cycle reactions in the biosynthesis of the cell wall peptidoglycan: transfers peptidoglycan precursor phospho-MurNAc-pentapeptide from UDP-MurNAc-pentapeptide onto the lipid carrier undecaprenyl phosphate, yielding undecaprenyl-pyrophosphoryl-MurNAc-pentapeptide, known as lipid I. This Delftia acidovorans (strain DSM 14801 / SPH-1) protein is Phospho-N-acetylmuramoyl-pentapeptide-transferase.